A 569-amino-acid chain; its full sequence is Oxygen-dependent choline dehydrogenase (569 aa).

Asp9–Glu38 contacts FAD. The active-site Proton acceptor is His475.

This sequence belongs to the GMC oxidoreductase family. It depends on FAD as a cofactor.

The catalysed reaction is choline + A = betaine aldehyde + AH2. It catalyses the reaction betaine aldehyde + NAD(+) + H2O = glycine betaine + NADH + 2 H(+). It participates in amine and polyamine biosynthesis; betaine biosynthesis via choline pathway; betaine aldehyde from choline (cytochrome c reductase route): step 1/1. Functionally, involved in the biosynthesis of the osmoprotectant glycine betaine. Catalyzes the oxidation of choline to betaine aldehyde and betaine aldehyde to glycine betaine at the same rate. This is Oxygen-dependent choline dehydrogenase from Staphylococcus aureus (strain COL).